We begin with the raw amino-acid sequence, 137 residues long: Large ribosomal subunit protein uL16 (137 aa).

It belongs to the universal ribosomal protein uL16 family. In terms of assembly, part of the 50S ribosomal subunit.

Its function is as follows. Binds 23S rRNA and is also seen to make contacts with the A and possibly P site tRNAs. This is Large ribosomal subunit protein uL16 from Psychrobacter arcticus (strain DSM 17307 / VKM B-2377 / 273-4).